Here is a 104-residue protein sequence, read N- to C-terminus: L-rhamnose mutarotase (104 aa).

Tyrosine 18 is a binding site for substrate. The active-site Proton donor is the histidine 22. Substrate contacts are provided by residues tyrosine 41 and 76 to 77 (WW).

It belongs to the rhamnose mutarotase family. Homodimer.

The protein resides in the cytoplasm. It carries out the reaction alpha-L-rhamnose = beta-L-rhamnose. It functions in the pathway carbohydrate metabolism; L-rhamnose metabolism. Functionally, involved in the anomeric conversion of L-rhamnose. This chain is L-rhamnose mutarotase, found in Opitutus terrae (strain DSM 11246 / JCM 15787 / PB90-1).